The chain runs to 286 residues: MHDSRETFVNHAFVTGYPVKHSRSPLIHGHWLKQFGIRGSYRAHEVTPEAFPDFMRQIKEGRTDFCGGNVTIPHKEAAFRLADRPDELSAELGAANTLWLENGKIRATNTDGRGFVANLDERAKGWDRISAAVILGAGGASRAVIQAIRDRGVKTIHVVNRTPERARELADRFGTAVHAHSMAALPEVVSGAGLFVNTTSLGMDGEPAPAIDFSGLAPDAVVTDIVYVPLKTPLLRQAEEQGFRIVDGLGMLLHQAVPGFEKWFGLRPVVDETLRQIIISDMDRHA.

Residues 22-24 and Thr71 each bind shikimate; that span reads SRS. Lys75 functions as the Proton acceptor in the catalytic mechanism. Glu87 contacts NADP(+). Shikimate-binding residues include Asn96 and Asp111. NADP(+) is bound by residues 136 to 140, 160 to 165, and Ile225; these read GAGGA and NRTPER. Residue Tyr227 participates in shikimate binding. Gly248 contacts NADP(+).

The protein belongs to the shikimate dehydrogenase family. As to quaternary structure, homodimer.

It catalyses the reaction shikimate + NADP(+) = 3-dehydroshikimate + NADPH + H(+). Its pathway is metabolic intermediate biosynthesis; chorismate biosynthesis; chorismate from D-erythrose 4-phosphate and phosphoenolpyruvate: step 4/7. Involved in the biosynthesis of the chorismate, which leads to the biosynthesis of aromatic amino acids. Catalyzes the reversible NADPH linked reduction of 3-dehydroshikimate (DHSA) to yield shikimate (SA). In Rhizobium meliloti (strain 1021) (Ensifer meliloti), this protein is Shikimate dehydrogenase (NADP(+)).